The sequence spans 495 residues: Ectonucleoside triphosphate diphosphohydrolase 2 (495 aa).

Residues 1 to 4 (MAGK) lie on the Cytoplasmic side of the membrane. Residues 5–25 (LVSLVPPLLLAAVGLAGLLLL) form a helical membrane-spanning segment. The Extracellular portion of the chain corresponds to 26 to 462 (CVPTQDVREP…PGLRKGTHFS (437 aa)). The N-linked (GlcNAc...) asparagine glycan is linked to Asn64. The cysteines at positions 75 and 99 are disulfide-linked. Asn129 is a glycosylation site (N-linked (GlcNAc...) asparagine). Glu165 functions as the Proton acceptor in the catalytic mechanism. Residue 204–208 (GASTQ) participates in ATP binding. Disulfide bonds link Cys242–Cys284 and Cys265–Cys310. Asn294 and Asn319 each carry an N-linked (GlcNAc...) asparagine glycan. Cystine bridges form between Cys323–Cys328 and Cys377–Cys399. N-linked (GlcNAc...) asparagine glycans are attached at residues Asn378 and Asn443. A helical transmembrane segment spans residues 463–483 (SWVALLLLFTVLILAALVLLL). Residues 484-495 (RQVRSAKSPGAL) lie on the Cytoplasmic side of the membrane.

Belongs to the GDA1/CD39 NTPase family. It depends on Ca(2+) as a cofactor. Requires Mg(2+) as cofactor.

It is found in the cell membrane. In the nervous system, could hydrolyze ATP and other nucleotides to regulate purinergic neurotransmission. Hydrolyzes ADP only to a marginal extent. The protein is Ectonucleoside triphosphate diphosphohydrolase 2 (Entpd2) of Mus musculus (Mouse).